The primary structure comprises 405 residues: CCA-adding enzyme (405 aa).

Positions 8 and 11 each coordinate ATP. Residues glycine 8 and arginine 11 each contribute to the CTP site. Positions 21 and 23 each coordinate Mg(2+). 3 residues coordinate ATP: arginine 91, arginine 137, and arginine 140. CTP contacts are provided by arginine 91, arginine 137, and arginine 140. In terms of domain architecture, HD spans 220 to 326; it reads PLSHGLSTLS…LNFFDELDLW (107 aa).

This sequence belongs to the tRNA nucleotidyltransferase/poly(A) polymerase family. Bacterial CCA-adding enzyme type 2 subfamily. Mg(2+) serves as cofactor.

It catalyses the reaction a tRNA precursor + 2 CTP + ATP = a tRNA with a 3' CCA end + 3 diphosphate. The catalysed reaction is a tRNA with a 3' CCA end + 2 CTP + ATP = a tRNA with a 3' CCACCA end + 3 diphosphate. Its function is as follows. Catalyzes the addition and repair of the essential 3'-terminal CCA sequence in tRNAs without using a nucleic acid template. Adds these three nucleotides in the order of C, C, and A to the tRNA nucleotide-73, using CTP and ATP as substrates and producing inorganic pyrophosphate. tRNA 3'-terminal CCA addition is required both for tRNA processing and repair. Also involved in tRNA surveillance by mediating tandem CCA addition to generate a CCACCA at the 3' terminus of unstable tRNAs. While stable tRNAs receive only 3'-terminal CCA, unstable tRNAs are marked with CCACCA and rapidly degraded. The polypeptide is CCA-adding enzyme (Hamiltonella defensa subsp. Acyrthosiphon pisum (strain 5AT)).